A 646-amino-acid chain; its full sequence is UvrABC system protein C (646 aa).

Residues 16-95 form the GIY-YIG domain; sequence VEPGVYRFRD…IKEFDPRFNV (80 aa). Residues 208-243 enclose the UVR domain; it reads DRFARALEQQMNAAAEQLDFERAARLRDDLSALKRA.

Belongs to the UvrC family. As to quaternary structure, interacts with UvrB in an incision complex.

Its subcellular location is the cytoplasm. Functionally, the UvrABC repair system catalyzes the recognition and processing of DNA lesions. UvrC both incises the 5' and 3' sides of the lesion. The N-terminal half is responsible for the 3' incision and the C-terminal half is responsible for the 5' incision. The chain is UvrABC system protein C from Mycobacterium bovis (strain BCG / Pasteur 1173P2).